Consider the following 93-residue polypeptide: Aspartyl/glutamyl-tRNA(Asn/Gln) amidotransferase subunit C (93 aa).

Belongs to the GatC family. As to quaternary structure, heterotrimer of A, B and C subunits.

It carries out the reaction L-glutamyl-tRNA(Gln) + L-glutamine + ATP + H2O = L-glutaminyl-tRNA(Gln) + L-glutamate + ADP + phosphate + H(+). The enzyme catalyses L-aspartyl-tRNA(Asn) + L-glutamine + ATP + H2O = L-asparaginyl-tRNA(Asn) + L-glutamate + ADP + phosphate + 2 H(+). Functionally, allows the formation of correctly charged Asn-tRNA(Asn) or Gln-tRNA(Gln) through the transamidation of misacylated Asp-tRNA(Asn) or Glu-tRNA(Gln) in organisms which lack either or both of asparaginyl-tRNA or glutaminyl-tRNA synthetases. The reaction takes place in the presence of glutamine and ATP through an activated phospho-Asp-tRNA(Asn) or phospho-Glu-tRNA(Gln). This Rubrobacter xylanophilus (strain DSM 9941 / JCM 11954 / NBRC 16129 / PRD-1) protein is Aspartyl/glutamyl-tRNA(Asn/Gln) amidotransferase subunit C.